Here is a 227-residue protein sequence, read N- to C-terminus: Cytochrome c oxidase subunit 2 (227 aa).

At 1 to 14 the chain is on the mitochondrial intermembrane side; the sequence is MAYPFQLGFQDATS. The chain crosses the membrane as a helical span at residues 15-45; the sequence is PIMEELLHFHDHALMIVFLISSLVLYLISVM. At 46–59 the chain is on the mitochondrial matrix side; the sequence is LTTSLTHTSTMDAQ. Residues 60–87 traverse the membrane as a helical segment; sequence EVETIWTILPAMILIMIALPSLRILYMM. Over 88 to 227 the chain is Mitochondrial intermembrane; it reads DEINNPYLTV…YFEKWSSSML (140 aa). Positions 161, 196, 198, 200, 204, and 207 each coordinate Cu cation. Residue E198 participates in Mg(2+) binding. Y218 bears the Phosphotyrosine mark.

Belongs to the cytochrome c oxidase subunit 2 family. As to quaternary structure, component of the cytochrome c oxidase (complex IV, CIV), a multisubunit enzyme composed of 14 subunits. The complex is composed of a catalytic core of 3 subunits MT-CO1, MT-CO2 and MT-CO3, encoded in the mitochondrial DNA, and 11 supernumerary subunits COX4I, COX5A, COX5B, COX6A, COX6B, COX6C, COX7A, COX7B, COX7C, COX8 and NDUFA4, which are encoded in the nuclear genome. The complex exists as a monomer or a dimer and forms supercomplexes (SCs) in the inner mitochondrial membrane with NADH-ubiquinone oxidoreductase (complex I, CI) and ubiquinol-cytochrome c oxidoreductase (cytochrome b-c1 complex, complex III, CIII), resulting in different assemblies (supercomplex SCI(1)III(2)IV(1) and megacomplex MCI(2)III(2)IV(2)). Found in a complex with TMEM177, COA6, COX18, COX20, SCO1 and SCO2. Interacts with TMEM177 in a COX20-dependent manner. Interacts with COX20. Interacts with COX16. The cofactor is Cu cation.

Its subcellular location is the mitochondrion inner membrane. The catalysed reaction is 4 Fe(II)-[cytochrome c] + O2 + 8 H(+)(in) = 4 Fe(III)-[cytochrome c] + 2 H2O + 4 H(+)(out). Its function is as follows. Component of the cytochrome c oxidase, the last enzyme in the mitochondrial electron transport chain which drives oxidative phosphorylation. The respiratory chain contains 3 multisubunit complexes succinate dehydrogenase (complex II, CII), ubiquinol-cytochrome c oxidoreductase (cytochrome b-c1 complex, complex III, CIII) and cytochrome c oxidase (complex IV, CIV), that cooperate to transfer electrons derived from NADH and succinate to molecular oxygen, creating an electrochemical gradient over the inner membrane that drives transmembrane transport and the ATP synthase. Cytochrome c oxidase is the component of the respiratory chain that catalyzes the reduction of oxygen to water. Electrons originating from reduced cytochrome c in the intermembrane space (IMS) are transferred via the dinuclear copper A center (CU(A)) of subunit 2 and heme A of subunit 1 to the active site in subunit 1, a binuclear center (BNC) formed by heme A3 and copper B (CU(B)). The BNC reduces molecular oxygen to 2 water molecules using 4 electrons from cytochrome c in the IMS and 4 protons from the mitochondrial matrix. The sequence is that of Cytochrome c oxidase subunit 2 (MT-CO2) from Rousettus leschenaultii (Leschenault's rousette).